The primary structure comprises 397 residues: Tauropine dehydrogenase (397 aa).

Belongs to the lysopine/nopaline/octopine/opine/vitopine dehydrogenases family.

It catalyses the reaction tauropine + NAD(+) + H2O = taurine + pyruvate + NADH + H(+). Its activity is regulated as follows. Subject to substrate inhibition by pyruvate for the reverse reaction but not for the forward reaction of the tauropine dehydrogenase activity. Its function is as follows. May play a role in maintaining a redox balance during environmental and functional hypoxia. Exhibits high specificity for taurine and in addition, requires both alpha amino group and C-2 carbon chain length as a critical factor for active site binding of the amino acid. A methyl group in the beta position may be critical for active site binding of the keto acid. In the reverse reaction requires NAD(H) for the activity but not NADP(H). This is Tauropine dehydrogenase from Arabella iricolor (Opal worm).